Reading from the N-terminus, the 105-residue chain is DEPLKTDLVSPPVCGNYFVEVGEDCDCGSPATCRDSCCDAATCKLRQGAQCREGLCCDQCRFKGAGTECRAATDECDMADLCTGRSAECTDRFQRNGQPCQNNNG.

The Peptidase M12B domain maps to Asp-1–Pro-3. Positions Pro-11–Asn-96 constitute a Disintegrin domain. Intrachain disulfides connect Cys-25–Cys-43, Cys-27–Cys-38, Cys-37–Cys-60, Cys-51–Cys-57, Cys-56–Cys-82, and Cys-69–Cys-89. Positions Glu-75–Asp-77 match the D/ECD-tripeptide motif. A propeptide spanning residues Pro-99 to Gly-105 is cleaved from the precursor.

Belongs to the venom metalloproteinase (M12B) family. P-III subfamily. As to quaternary structure, monomer. Zn(2+) is required as a cofactor. Expressed by the venom gland.

It localises to the secreted. Its function is as follows. Impairs hemostasis in the envenomed animal. In terms of biological role, inhibits platelet aggregation induced by ADP, thrombin, platelet-activating factor and collagen. Acts by inhibiting fibrinogen interaction with platelet receptors GPIIb/GPIIIa (ITGA2B/ITGB3). The polypeptide is Zinc metalloproteinase/disintegrin (Gloydius brevicauda (Korean slamosa snake)).